The chain runs to 216 residues: GTP cyclohydrolase 1 (216 aa).

Zn(2+)-binding residues include Cys-108, His-111, and Cys-179.

It belongs to the GTP cyclohydrolase I family. Toroid-shaped homodecamer, composed of two pentamers of five dimers.

The catalysed reaction is GTP + H2O = 7,8-dihydroneopterin 3'-triphosphate + formate + H(+). It functions in the pathway cofactor biosynthesis; 7,8-dihydroneopterin triphosphate biosynthesis; 7,8-dihydroneopterin triphosphate from GTP: step 1/1. This chain is GTP cyclohydrolase 1, found in Shewanella sp. (strain ANA-3).